We begin with the raw amino-acid sequence, 295 residues long: tRNA-cytidine(32) 2-sulfurtransferase (295 aa).

Positions 59 to 64 (SGGKDS) match the PP-loop motif motif. The [4Fe-4S] cluster site is built by C134, C137, and C225.

Belongs to the TtcA family. As to quaternary structure, homodimer. It depends on Mg(2+) as a cofactor. [4Fe-4S] cluster is required as a cofactor.

The protein resides in the cytoplasm. It catalyses the reaction cytidine(32) in tRNA + S-sulfanyl-L-cysteinyl-[cysteine desulfurase] + AH2 + ATP = 2-thiocytidine(32) in tRNA + L-cysteinyl-[cysteine desulfurase] + A + AMP + diphosphate + H(+). Its pathway is tRNA modification. Catalyzes the ATP-dependent 2-thiolation of cytidine in position 32 of tRNA, to form 2-thiocytidine (s(2)C32). The sulfur atoms are provided by the cysteine/cysteine desulfurase (IscS) system. The polypeptide is tRNA-cytidine(32) 2-sulfurtransferase (Ruegeria sp. (strain TM1040) (Silicibacter sp.)).